The chain runs to 505 residues: Maturase K (505 aa).

The protein belongs to the intron maturase 2 family. MatK subfamily.

The protein localises to the plastid. Its subcellular location is the chloroplast. Functionally, usually encoded in the trnK tRNA gene intron. Probably assists in splicing its own and other chloroplast group II introns. This is Maturase K from Spinacia oleracea (Spinach).